A 489-amino-acid polypeptide reads, in one-letter code: MVPVIALVGRPNVGKSTMFNRLTRTRDAIVGDLSGLTRDRQYGEAKWQGRSYILIDTGGISGDEHGMDEKMAEQSLLAIEEADVVLFLVDARAGYTAADQMIGEHLRKRNKRSYVVANKIDNIDENLARAEFSPMGLGDAIPVAGAHGRGISQMLEIALREFPKDEDELEEGEVEEVAEGQEAKRIPGPSEKDGIKIAIIGRPNVGKSTLVNRMLGEDRVIVYDEPGTTRDSIYIPFERNEEKYTLIDTAGVRKRGKIHEEVEKFSVVKTLQAIKDANVVIFVMDAREGVVDHDLNLLGFALEAGRALVIALNKWDGMTPGERDFVKIELERRLFFVDFADIHFISALHGTGVGNLYQSVQNSFKSAVTRWPTSRLTQILEDAVSEHAPPMVGSRRIKLRYAHLGGANPPLIVIHGNQVEKVPKSYVRYLENTYRRVLKLVGTPIRIEFKGGENPYEGNKNTLTDRQVNKKRRMMSHHKKADKKRRDKR.

EngA-type G domains follow at residues 3–166 (PVIA…PKDE) and 195–368 (IKIA…KSAV). Residues 9–16 (GRPNVGKS), 56–60 (DTGGI), 118–121 (NKID), 201–208 (GRPNVGKS), 248–252 (DTAGV), and 313–316 (NKWD) contribute to the GTP site. One can recognise a KH-like domain in the interval 369–453 (TRWPTSRLTQ…PIRIEFKGGE (85 aa)). Positions 451 to 489 (GGENPYEGNKNTLTDRQVNKKRRMMSHHKKADKKRRDKR) are disordered. A compositionally biased stretch (basic residues) spans 469 to 489 (NKKRRMMSHHKKADKKRRDKR).

This sequence belongs to the TRAFAC class TrmE-Era-EngA-EngB-Septin-like GTPase superfamily. EngA (Der) GTPase family. In terms of assembly, associates with the 50S ribosomal subunit.

GTPase that plays an essential role in the late steps of ribosome biogenesis. This chain is GTPase Der, found in Pseudomonas syringae pv. tomato (strain ATCC BAA-871 / DC3000).